The chain runs to 466 residues: Delta-1 crystallin (466 aa).

Ala-2 is subject to Blocked amino end (Ala).

It belongs to the lyase 1 family. Argininosuccinate lyase subfamily. Homotetramer. Post-translationally, the N-terminus is blocked. Eye lens.

Functionally, delta crystallin, the principal crystallin in embryonic lens, is found only in birds and reptiles. This chain is Delta-1 crystallin (ASL1), found in Gallus gallus (Chicken).